Here is a 196-residue protein sequence, read N- to C-terminus: RNA pyrophosphohydrolase (196 aa).

The region spanning 6–149 (GYRPNVGIVI…KRDVYRKVMK (144 aa)) is the Nudix hydrolase domain. The short motif at 38–59 (GGINDNESAEQAMYRELHEEVG) is the Nudix box element.

This sequence belongs to the Nudix hydrolase family. RppH subfamily. Requires a divalent metal cation as cofactor.

Accelerates the degradation of transcripts by removing pyrophosphate from the 5'-end of triphosphorylated RNA, leading to a more labile monophosphorylated state that can stimulate subsequent ribonuclease cleavage. This is RNA pyrophosphohydrolase from Haemophilus influenzae (strain ATCC 51907 / DSM 11121 / KW20 / Rd).